The chain runs to 117 residues: MAGKKKNDRHVEGDEVIRVPLPDRSKGQLFGVIEQALGAGWMDVRCEDGKVRRCRIPGKLKRRMWMRVGDVVIVQPWPVQSDERGDIVYRYTRTQVDWLLRKGKITQDFLSGGELLF.

The 76-residue stretch at 17 to 92 folds into the S1-like domain; it reads IRVPLPDRSK…ERGDIVYRYT (76 aa).

The protein belongs to the eIF-1A family.

Seems to be required for maximal rate of protein biosynthesis. Enhances ribosome dissociation into subunits and stabilizes the binding of the initiator Met-tRNA(I) to 40 S ribosomal subunits. This is Translation initiation factor 1A from Thermococcus kodakarensis (strain ATCC BAA-918 / JCM 12380 / KOD1) (Pyrococcus kodakaraensis (strain KOD1)).